Reading from the N-terminus, the 385-residue chain is Suppressor protein STP22 of temperature-sensitive alpha-factor receptor and arginine permease (385 aa).

The 150-residue stretch at 12–161 (AVVNWLFKVI…LHEPPQDQAP (150 aa)) folds into the UEV domain. The disordered stretch occupies residues 155–219 (PPQDQAPSLP…DMDNTDISPT (65 aa)). Polar residues predominate over residues 168 to 177 (NTQLQQEQNT). Pro residues predominate over residues 178-201 (PPLPPKPKSPHLKPPLPPPPPPQP). Residues 272–300 (LRAVEQAIEQTMHSLNAQIDVLTANRAKV) are a coiled coil. The region spanning 322–385 (TDGLNQLYNL…HIQRITSPLS (64 aa)) is the SB domain.

It belongs to the ubiquitin-conjugating enzyme family. UEV subfamily. As to quaternary structure, component of the ESCRT-I complex (endosomal sorting complex required for transport I) which consists of STP22, VPS28, SRN2 and MVB12 in a 1:1:1:1 stoichiometry. Interacts with HSE1 and VPS27. Interacts with MVB12 and SRN2.

It localises to the cytoplasm. Its subcellular location is the endosome. The protein resides in the late endosome membrane. Functionally, component of the ESCRT-I complex, a regulator of vesicular trafficking process. Binds to ubiquitinated cargo proteins and is required for the sorting of endocytic ubiquitinated cargos into multivesicular bodies (MVBs). Mediates the association to the ESCRT-0 complex. Required for vacuolar targeting of temperature-sensitive plasma membrane proteins STE2 and CAN1. In Saccharomyces cerevisiae (strain ATCC 204508 / S288c) (Baker's yeast), this protein is Suppressor protein STP22 of temperature-sensitive alpha-factor receptor and arginine permease (STP22).